We begin with the raw amino-acid sequence, 411 residues long: Inhibin beta B chain (411 aa).

Residues 1-28 form the signal peptide; that stretch reads MDGLPGRALGAACLLLLVAGWLGPEAWG. Residues 28 to 69 form a disordered region; the sequence is GSPTPPPSPAAPPPPPPPGAPGGSQDTCTSCGGGGGGFRRPE. The propeptide occupies 29–296; it reads SPTPPPSPAA…GDSRHRIRKR (268 aa). Residues 30 to 47 are compositionally biased toward pro residues; sequence PTPPPSPAAPPPPPPPGA. N97 is a glycosylation site (N-linked (GlcNAc...) asparagine). 4 disulfide bridges follow: C300-C308, C307-C376, C336-C408, and C340-C410.

This sequence belongs to the TGF-beta family. In terms of assembly, dimeric, linked by one or more disulfide bonds. Inhibin B is a dimer of alpha and beta-B. Activin B is a homodimer of beta-B. Activin AB is a dimer of beta-A and beta-B. Interacts with FST and FSTL3. Activin B interacts with BMPR2. In terms of tissue distribution, uterus, testis, ovary, lung, kidney, brain, CJ7 embryonic stem cells, and possibly in liver.

It localises to the secreted. In terms of biological role, inhibins and activins inhibit and activate, respectively, the secretion of follitropin by the pituitary gland. Inhibins/activins are involved in regulating a number of diverse functions such as hypothalamic and pituitary hormone secretion, gonadal hormone secretion, germ cell development and maturation, erythroid differentiation, insulin secretion, nerve cell survival, embryonic axial development or bone growth, depending on their subunit composition. Inhibins appear to oppose the functions of activins. Its function is as follows. Activin B is a dimer of alpha and beta-B that plays a role in several essential biological processes including embryonic development, stem cell maintenance and differentiation, haematopoiesis, cell proliferation and wound healing. Signals through type I receptor ACVR1C, abundantly expressed in pancreatic beta cells, and type II receptors like ACVR2A. Upon ligand binding, these receptors phosphorylate intracellular signaling mediators SMAD2 and SMAD3, which form a complex with SMAD4, translocate to the nucleus, and regulate gene expression. Plays a crucial role in the induction of hepcidin by inflammation through activation of ACVR1C and subsequent phosphorylation of SMAD1/5/8. Regulates adipocyte lipid metabolism by decreasing non-esterified fatty acids and glycerol release and increases intracellular triglyceride content. Stimulates wound healing by promoting cell migration and hair follicle regeneration through the JNK and ERK signaling pathways downstream of RHOA. Inhibin B is a dimer of alpha and beta-B that plays a crucial role in the regulation of the reproductive system by inhibiting the secretion of follicle-stimulating hormone (FSH) from the anterior pituitary gland. Thereby, maintains reproductive homeostasis in both males and females. Acts as a more potent suppressor of FSH release than inhibin A. Functions as competitive receptor antagonist binding activin type II receptors with high affinity in the presence of the TGF-beta type III coreceptor/TGFBR3L. The sequence is that of Inhibin beta B chain (Inhbb) from Mus musculus (Mouse).